Here is a 116-residue protein sequence, read N- to C-terminus: Large ribosomal subunit protein bL19 (116 aa).

Belongs to the bacterial ribosomal protein bL19 family.

In terms of biological role, this protein is located at the 30S-50S ribosomal subunit interface and may play a role in the structure and function of the aminoacyl-tRNA binding site. In Pseudomonas putida (strain ATCC 700007 / DSM 6899 / JCM 31910 / BCRC 17059 / LMG 24140 / F1), this protein is Large ribosomal subunit protein bL19.